Here is a 203-residue protein sequence, read N- to C-terminus: Phospho-2-dehydro-3-deoxyheptonate aldolase (203 aa).

Residues Met1–Arg10 are compositionally biased toward basic and acidic residues. The tract at residues Met1 to Ala28 is disordered.

Belongs to the class-I DAHP synthase family.

The enzyme catalyses D-erythrose 4-phosphate + phosphoenolpyruvate + H2O = 7-phospho-2-dehydro-3-deoxy-D-arabino-heptonate + phosphate. Its pathway is metabolic intermediate biosynthesis; chorismate biosynthesis; chorismate from D-erythrose 4-phosphate and phosphoenolpyruvate: step 1/7. Functionally, stereospecific condensation of phosphoenolpyruvate (PEP) and D-erythrose-4-phosphate (E4P) giving rise to 3-deoxy-D-arabino-heptulosonate-7-phosphate (DAHP). The polypeptide is Phospho-2-dehydro-3-deoxyheptonate aldolase (aroA) (Amycolatopsis methanolica).